A 602-amino-acid polypeptide reads, in one-letter code: Aspartate--tRNA(Asp/Asn) ligase (602 aa).

An L-aspartate-binding site is contributed by E175. The segment at 199–202 is aspartate; the sequence is QIFK. Residue R221 coordinates L-aspartate. Residues 221 to 223 and Q230 each bind ATP; that span reads RDE. H458 serves as a coordination point for L-aspartate. ATP is bound at residue E492. R499 is an L-aspartate binding site. An ATP-binding site is contributed by 544 to 547; that stretch reads GLDR.

This sequence belongs to the class-II aminoacyl-tRNA synthetase family. Type 1 subfamily. As to quaternary structure, homodimer.

It is found in the cytoplasm. It carries out the reaction tRNA(Asx) + L-aspartate + ATP = L-aspartyl-tRNA(Asx) + AMP + diphosphate. In terms of biological role, aspartyl-tRNA synthetase with relaxed tRNA specificity since it is able to aspartylate not only its cognate tRNA(Asp) but also tRNA(Asn). Reaction proceeds in two steps: L-aspartate is first activated by ATP to form Asp-AMP and then transferred to the acceptor end of tRNA(Asp/Asn). The sequence is that of Aspartate--tRNA(Asp/Asn) ligase from Cupriavidus metallidurans (strain ATCC 43123 / DSM 2839 / NBRC 102507 / CH34) (Ralstonia metallidurans).